Here is a 92-residue protein sequence, read N- to C-terminus: RNA-binding protein Hfq (92 aa).

The Sm domain maps to 9–68 (DPFLNALRRERVPVSVYLVNGIKLQGTIESFDQFVVLLRNTVSQMVYKHAISTVVPARNV).

It belongs to the Hfq family. As to quaternary structure, homohexamer.

Functionally, RNA chaperone that binds small regulatory RNA (sRNAs) and mRNAs to facilitate mRNA translational regulation in response to envelope stress, environmental stress and changes in metabolite concentrations. Also binds with high specificity to tRNAs. In Xylella fastidiosa (strain M12), this protein is RNA-binding protein Hfq.